Reading from the N-terminus, the 329-residue chain is uncharacterized protein (329 aa).

The protein to type I restriction system adenine methylases.

This is an uncharacterized protein from Bacillus subtilis (strain 168).